The following is a 39-amino-acid chain: Cytochrome b559 subunit beta (39 aa).

The helical transmembrane segment at 14–30 threads the bilayer; the sequence is WLAVHGLAVPTVFFLGS. Residue histidine 18 participates in heme binding.

The protein belongs to the PsbE/PsbF family. As to quaternary structure, heterodimer of an alpha subunit and a beta subunit. PSII is composed of 1 copy each of membrane proteins PsbA, PsbB, PsbC, PsbD, PsbE, PsbF, PsbH, PsbI, PsbJ, PsbK, PsbL, PsbM, PsbT, PsbX, PsbY, PsbZ, Psb30/Ycf12, at least 3 peripheral proteins of the oxygen-evolving complex and a large number of cofactors. It forms dimeric complexes. The cofactor is heme b.

The protein localises to the plastid. The protein resides in the chloroplast thylakoid membrane. In terms of biological role, this b-type cytochrome is tightly associated with the reaction center of photosystem II (PSII). PSII is a light-driven water:plastoquinone oxidoreductase that uses light energy to abstract electrons from H(2)O, generating O(2) and a proton gradient subsequently used for ATP formation. It consists of a core antenna complex that captures photons, and an electron transfer chain that converts photonic excitation into a charge separation. The sequence is that of Cytochrome b559 subunit beta from Pinus koraiensis (Korean pine).